The primary structure comprises 378 residues: Mannitol-1-phosphate 5-dehydrogenase (378 aa).

Residue 4–15 (SVHFGAGNIGRG) participates in NAD(+) binding.

It belongs to the mannitol dehydrogenase family.

It carries out the reaction D-mannitol 1-phosphate + NAD(+) = beta-D-fructose 6-phosphate + NADH + H(+). In Streptococcus pneumoniae (strain ATCC BAA-255 / R6), this protein is Mannitol-1-phosphate 5-dehydrogenase.